The chain runs to 227 residues: RNA-free ribonuclease P (227 aa).

Belongs to the HARP family.

The enzyme catalyses Endonucleolytic cleavage of RNA, removing 5'-extranucleotides from tRNA precursor.. In terms of biological role, RNA-free RNase P that catalyzes the removal of the 5'-leader sequence from pre-tRNA to produce the mature 5'-terminus. In Archaeoglobus fulgidus (strain ATCC 49558 / DSM 4304 / JCM 9628 / NBRC 100126 / VC-16), this protein is RNA-free ribonuclease P.